The chain runs to 113 residues: MEVNLLSISIKPPIKIPKNKTVELDVDWNIEYKKLDAKKFNFVCNIKAYGDFSFEANIEGEISTENDYDNIPDFISVSIVENLMKSLPKLVSYAQQFRIEENVFVNQPLSLAS.

This is an uncharacterized protein from Methanocaldococcus jannaschii (strain ATCC 43067 / DSM 2661 / JAL-1 / JCM 10045 / NBRC 100440) (Methanococcus jannaschii).